Here is a 740-residue protein sequence, read N- to C-terminus: Pheromone-regulated membrane protein 10 (740 aa).

3 disordered regions span residues 1 to 48 (MGKN…RSGL), 65 to 97 (FADE…KEEC), and 241 to 269 (NQPG…PTGE). Over residues 7-18 (QAAEGEEARRGS) the composition is skewed to basic and acidic residues. Positions 19–33 (ESSGSSAEPSGAVAE) are enriched in low complexity. The segment covering 67–76 (DEDEVVEQDE) has biased composition (acidic residues). Residues 256-267 (SAQTLSSETLPT) are compositionally biased toward polar residues. 10 consecutive transmembrane segments (helical) span residues 422–442 (AWMC…FAFG), 445–465 (WINL…QFIV), 475–495 (VFEI…GSIP), 499–519 (ICFG…YIIL), 541–561 (IIYS…FGWI), 574–594 (ELSP…LSLI), 599–619 (WSQI…TYWS), 622–642 (HFTA…GIMG), 651–671 (GLAM…GIAS), and 707–727 (ITMI…TLVV).

It belongs to the ThrE exporter (TC 2.A.79) family.

It localises to the membrane. The polypeptide is Pheromone-regulated membrane protein 10 (Eremothecium gossypii (strain ATCC 10895 / CBS 109.51 / FGSC 9923 / NRRL Y-1056) (Yeast)).